A 162-amino-acid chain; its full sequence is Sorting nexin-3 (162 aa).

The residue at position 2 (alanine 2) is an N-acetylalanine. The 125-residue stretch at 27–151 (NFLEIDVSNP…HMFLQDEIID (125 aa)) folds into the PX domain. Position 43 is an omega-N-methylarginine (arginine 43). A 1,2-diacyl-sn-glycero-3-phospho-(1D-myo-inositol-3-phosphate)-binding residues include arginine 70, serine 72, lysine 95, and arginine 118. Serine 72 carries the phosphoserine modification. Residue lysine 95 forms a Glycyl lysine isopeptide (Lys-Gly) (interchain with G-Cter in SUMO2) linkage. Positions 147-162 (DEIIDKSYTPSKIRHA) are binds predominantly to PtdIns(P5) and weaker to PtdIns(P3) abd PtdIns(P4); involved in neurite outgrowth regulation.

Belongs to the sorting nexin family. As to quaternary structure, interacts with VPS26A, VPS29 and VPS35; the interaction with VPS35 is direct. The association with the retromer CSC subcomplex subunits is proposed to represent a functional distinct retromer variant described as SNX3-retromer complex. Interacts with USP10 and SCNN1A. Interacts with TRFC. Interacts with SNX8; 2 molecules of SNX8 seems to associate with one molecule of SNX3. Interacts with PTPRU. Interacts with MON2 and DOP1B. Post-translationally, ubiquitinated, leading to its proteasomal degradation. Deubiquitinated by USP10.

The protein resides in the early endosome. Its subcellular location is the cytoplasmic vesicle. It localises to the phagosome. Phosphoinositide-binding protein required for multivesicular body formation. Specifically binds phosphatidylinositol 3-phosphate (PtdIns(P3)). Can also bind phosphatidylinositol 4-phosphate (PtdIns(P4)), phosphatidylinositol 5-phosphate (PtdIns(P5)) and phosphatidylinositol 3,5-biphosphate (PtdIns(3,5)P2). Plays a role in protein transport between cellular compartments. Together with RAB7A facilitates endosome membrane association of the retromer cargo-selective subcomplex (CSC/VPS). May in part act as component of the SNX3-retromer complex which mediates the retrograde endosome-to-TGN transport of WLS distinct from the SNX-BAR retromer pathway. Promotes stability and cell surface expression of epithelial sodium channel (ENAC) subunits SCNN1A and SCNN1G. Not involved in EGFR degradation. Involved in the regulation of phagocytosis in dendritic cells possibly by regulating EEA1 recruitment to the nascent phagosomes. Involved in iron homeostasis through regulation of endocytic recycling of the transferrin receptor TFRC presumably by delivering the transferrin:transferrin receptor complex to recycling endosomes; the function may involve the CSC retromer subcomplex. In the case of Salmonella enterica infection plays arole in maturation of the Salmonella-containing vacuole (SCV) and promotes recruitment of LAMP1 to SCVs. The chain is Sorting nexin-3 from Homo sapiens (Human).